The chain runs to 95 residues: Protein translocase subunit SecE (95 aa).

Residues 1–35 (MTDAVGSIDMPDAEDEAPESKKKSRKGGKRGKKGP) form a disordered region. Residues 22 to 35 (KKSRKGGKRGKKGP) are compositionally biased toward basic residues. The chain crosses the membrane as a helical span at residues 67–87 (VVIVFVVVMIGLVTVLDIGFA).

The protein belongs to the SecE/SEC61-gamma family. Component of the Sec protein translocase complex. Heterotrimer consisting of SecY, SecE and SecG subunits. The heterotrimers can form oligomers, although 1 heterotrimer is thought to be able to translocate proteins. Interacts with the ribosome. Interacts with SecDF, and other proteins may be involved. Interacts with SecA.

The protein localises to the cell membrane. In terms of biological role, essential subunit of the Sec protein translocation channel SecYEG. Clamps together the 2 halves of SecY. May contact the channel plug during translocation. This Streptomyces griseus protein is Protein translocase subunit SecE.